The primary structure comprises 140 residues: Protein SamA (140 aa).

Catalysis depends on for autocatalytic cleavage activity residues serine 61 and lysine 98.

This sequence belongs to the peptidase S24 family.

Its function is as follows. Involved in UV protection and mutation. The protein is Protein SamA (samA) of Salmonella typhimurium (strain LT2 / SGSC1412 / ATCC 700720).